We begin with the raw amino-acid sequence, 476 residues long: Abscisic acid 8'-hydroxylase CYP707A1 (476 aa).

A helical membrane pass occupies residues 5–25 (FEIFLYISMFVLGYLSYYFCF). Cys-422 is a heme binding site.

This sequence belongs to the cytochrome P450 family. Heme is required as a cofactor. As to expression, expressed in ovaries (specifically in ovules and placenta), sepals, petals and pedicels.

It is found in the membrane. The enzyme catalyses 2-cis-(+)-abscisate + reduced [NADPH--hemoprotein reductase] + O2 = (+)-8'-hydroxyabscisate + oxidized [NADPH--hemoprotein reductase] + H2O + H(+). Its pathway is plant hormone degradation; abscisic acid degradation. Involved in the oxidative degradation of abscisic acid, especially in pollinated ovaries. The protein is Abscisic acid 8'-hydroxylase CYP707A1 of Solanum lycopersicum (Tomato).